The primary structure comprises 121 residues: Two-component response regulator ORR8 (121 aa).

In terms of domain architecture, Response regulatory spans 5–121 (HVLVVDDTHV…VDVPRIMKYI (117 aa)). Aspartate 55 is subject to 4-aspartylphosphate.

This sequence belongs to the ARR family. Type-A subfamily. In terms of processing, two-component system major event consists of a His-to-Asp phosphorelay between a sensor histidine kinase (HK) and a response regulator (RR). In plants, the His-to-Asp phosphorelay involves an additional intermediate named Histidine-containing phosphotransfer protein (HPt). This multistep phosphorelay consists of a His-Asp-His-Asp sequential transfer of a phosphate group between first a His and an Asp of the HK protein, followed by the transfer to a conserved His of the HPt protein and finally the transfer to an Asp in the receiver domain of the RR protein. In terms of tissue distribution, expressed in mature leaves, and at low levels in roots, shoots and flowers.

In terms of biological role, functions as a response regulator involved in His-to-Asp phosphorelay signal transduction system. Phosphorylation of the Asp residue in the receiver domain activates the ability of the protein to promote the transcription of target genes. Type-A response regulators seem to act as negative regulators of the cytokinin signaling. The sequence is that of Two-component response regulator ORR8 from Oryza sativa subsp. indica (Rice).